A 202-amino-acid chain; its full sequence is Glycerol-3-phosphate acyltransferase (202 aa).

A run of 5 helical transmembrane segments spans residues 3-23 (ILLA…VVVS), 51-71 (KAAI…VWLV), 74-94 (FGIG…LGHL), 116-136 (AVHP…AFFF), and 140-160 (SLAA…LFGT).

It belongs to the PlsY family. As to quaternary structure, probably interacts with PlsX.

It localises to the cell inner membrane. The catalysed reaction is an acyl phosphate + sn-glycerol 3-phosphate = a 1-acyl-sn-glycero-3-phosphate + phosphate. It functions in the pathway lipid metabolism; phospholipid metabolism. Functionally, catalyzes the transfer of an acyl group from acyl-phosphate (acyl-PO(4)) to glycerol-3-phosphate (G3P) to form lysophosphatidic acid (LPA). This enzyme utilizes acyl-phosphate as fatty acyl donor, but not acyl-CoA or acyl-ACP. The protein is Glycerol-3-phosphate acyltransferase of Burkholderia thailandensis (strain ATCC 700388 / DSM 13276 / CCUG 48851 / CIP 106301 / E264).